A 102-amino-acid polypeptide reads, in one-letter code: DET1- and DDB1-associated protein 1 (102 aa).

A disordered region spans residues 67–102 (NAAKKRDQEQVEIEGENSAPPRKIARTDSQDMNEDT).

This sequence belongs to the DDA1 family. As to quaternary structure, component of numerous DCX (DDB1-CUL4-X-box) E3 ubiquitin-protein ligase complexes which consist of a core of DDB1, cullin-4 (CUL4A or CUL4B), DDA1 and RBX1.

It participates in protein modification; protein ubiquitination. Functions as a component of numerous distinct DCX (DDB1-CUL4-X-box) E3 ubiquitin-protein ligase complexes which mediate the ubiquitination and subsequent proteasomal degradation of target proteins. In the DCX complexes, acts as a scaffolding subunit required to stabilize the complex. The chain is DET1- and DDB1-associated protein 1 from Gallus gallus (Chicken).